We begin with the raw amino-acid sequence, 246 residues long: Deoxycytidylate 5-hydroxymethyltransferase (246 aa).

Residue C148 is part of the active site.

Belongs to the thymidylate synthase family.

The enzyme catalyses dCMP + (6R)-5,10-methylene-5,6,7,8-tetrahydrofolate + H2O = 5-hydroxymethyl-dCMP + (6S)-5,6,7,8-tetrahydrofolate. The chain is Deoxycytidylate 5-hydroxymethyltransferase (42) from Escherichia coli (Bacteriophage T2).